A 630-amino-acid chain; its full sequence is Kelch-like protein 14 (630 aa).

One can recognise a BTB domain in the interval 33 to 153 (CDVTLTAQGQ…LYTANVTLSL (121 aa)). A disordered region spans residues 69 to 117 (GGGVGGQDGLGAPKDQQQQQQPQQQPPQQQQPPPQEEPGTPSSSPDDKL). The segment covering 84–96 (QQQQQQPQQQPPQ) has biased composition (low complexity). The BACK domain occupies 212–281 (VEDVLLLNFE…PAPELVERVQ (70 aa)). Kelch repeat units follow at residues 325–374 (MLLL…EVEN), 375–426 (FLFV…RLDK), 427–473 (HLYV…VHNG), 475–520 (IYIS…VMND), 522–572 (LYAI…VLDD), and 574–622 (IYLV…TVIL).

Interacts with TOR1A. As to expression, expressed in the brain, primarily in neurons. In the cerebral cortex, mostly expressed in layers I and II (at protein level). Also observed in some neurons of the corpus striatum (at protein level). Expressed at high levels in the hippocampus, including in pyramidal cells of the CA1 and CA3 layers (at protein level). In the cerebellum, expression in Purkinje cells is higher than in granular cells (at protein level). Also detected in the medial septum, ventral pallidum, thalamus, hypothalamus, amygdala, inferior colliculi, locus caeruleus, peripyramidal nucleus, raphe nucleus, reticular formation, spinal trigeminal nucleus, and vestibular nuclei (at protein level). Low expression, if any, in glial cells (at protein level). Not observed in the corpus callosum.

Its subcellular location is the cytoplasm. The protein localises to the cytosol. It localises to the endoplasmic reticulum membrane. The protein is Kelch-like protein 14 (Klhl14) of Mus musculus (Mouse).